Consider the following 361-residue polypeptide: Peptide chain release factor 1 (361 aa).

Q235 is subject to N5-methylglutamine.

It belongs to the prokaryotic/mitochondrial release factor family. In terms of processing, methylated by PrmC. Methylation increases the termination efficiency of RF1.

It is found in the cytoplasm. Functionally, peptide chain release factor 1 directs the termination of translation in response to the peptide chain termination codons UAG and UAA. The protein is Peptide chain release factor 1 of Rhodopseudomonas palustris (strain ATCC BAA-98 / CGA009).